A 781-amino-acid chain; its full sequence is Translation initiation factor IF-2 (781 aa).

Residues 44–195 (RQLDNAVDGT…TPPKPKELPE (152 aa)) form a disordered region. Positions 53-65 (TNKKAEAPKKETT) are enriched in basic and acidic residues. The span at 66 to 81 (SNENGNSKGPNKPNMT) shows a compositional bias: polar residues. Positions 82-93 (NSNEKSNKPNKP) are enriched in low complexity. The span at 115 to 126 (KPANTGNQTQAS) shows a compositional bias: polar residues. The segment covering 127 to 169 (GNQQAGGQKRNNNNNSNRPGGGNPNRPGGNNRPNRGGNFNNKG) has biased composition (low complexity). The 170-residue stretch at 282-451 (ERPPVVTIMG…LLVSEVEELK (170 aa)) folds into the tr-type G domain. Residues 291–298 (GHVDHGKT) are G1. 291–298 (GHVDHGKT) lines the GTP pocket. The interval 316-320 (GITQH) is G2. The G3 stretch occupies residues 337 to 340 (DTPG). GTP is bound by residues 337–341 (DTPGH) and 391–394 (NKID). The tract at residues 391–394 (NKID) is G4. The interval 427–429 (SAK) is G5.

Belongs to the TRAFAC class translation factor GTPase superfamily. Classic translation factor GTPase family. IF-2 subfamily.

The protein resides in the cytoplasm. Its function is as follows. One of the essential components for the initiation of protein synthesis. Protects formylmethionyl-tRNA from spontaneous hydrolysis and promotes its binding to the 30S ribosomal subunits. Also involved in the hydrolysis of GTP during the formation of the 70S ribosomal complex. The sequence is that of Translation initiation factor IF-2 from Listeria monocytogenes serotype 4a (strain HCC23).